The chain runs to 443 residues: UPF0656 protein C926.02 (443 aa).

Belongs to the UPF0656 family.

The protein localises to the cytoplasm. The protein resides in the nucleus. This Schizosaccharomyces pombe (strain 972 / ATCC 24843) (Fission yeast) protein is UPF0656 protein C926.02.